A 130-amino-acid polypeptide reads, in one-letter code: UPF0102 protein TDE_2303 (130 aa).

The protein belongs to the UPF0102 family.

The polypeptide is UPF0102 protein TDE_2303 (Treponema denticola (strain ATCC 35405 / DSM 14222 / CIP 103919 / JCM 8153 / KCTC 15104)).